Reading from the N-terminus, the 282-residue chain is NFU1 iron-sulfur cluster scaffold homolog, mitochondrial (282 aa).

Residues Met1–Phe27 constitute a mitochondrion transit peptide. Residues Ile178–Val246 are nifU. Positions 215 and 218 each coordinate [4Fe-4S] cluster. The tract at residues Lys263–Asn282 is disordered.

This sequence belongs to the NifU family.

The protein localises to the mitochondrion. Molecular scaffold for [Fe-S] cluster assembly of mitochondrial iron-sulfur proteins. The chain is NFU1 iron-sulfur cluster scaffold homolog, mitochondrial from Drosophila persimilis (Fruit fly).